Consider the following 177-residue polypeptide: Alkyl hydroperoxide reductase AhpD (177 aa).

Cys130 serves as the catalytic Proton donor. Cys130 and Cys133 are disulfide-bonded. The Cysteine sulfenic acid (-SOH) intermediate role is filled by Cys133.

The protein belongs to the AhpD family. As to quaternary structure, homotrimer.

It catalyses the reaction N(6)-[(R)-dihydrolipoyl]-L-lysyl-[lipoyl-carrier protein] + a hydroperoxide = N(6)-[(R)-lipoyl]-L-lysyl-[lipoyl-carrier protein] + an alcohol + H2O. In terms of biological role, antioxidant protein with alkyl hydroperoxidase activity. Required for the reduction of the AhpC active site cysteine residues and for the regeneration of the AhpC enzyme activity. In Corynebacterium aurimucosum (strain ATCC 700975 / DSM 44827 / CIP 107346 / CN-1) (Corynebacterium nigricans), this protein is Alkyl hydroperoxide reductase AhpD.